The sequence spans 302 residues: GLABROUS1 enhancer-binding protein (302 aa).

Disordered regions lie at residues 1–55 and 158–229; these read MVTP…MKKK and GQGD…NDDD. At S27 the chain carries Phosphoserine. Positions 180–195 are enriched in basic and acidic residues; that stretch reads RTNESGEEMLKEHEEE. Residues 208-217 are compositionally biased toward polar residues; sequence AKTTENGTSS. The segment at 270–291 is non-canonical leucine-zipper; it reads LSDEWKALCVEETRFNIKKLRF.

It belongs to the GeBP family. Homo- and heterodimers. Interacts with GPL1, GPL2 and GPL3. Interacts with KIN10, KIN11 and FLZ4. Interacts with KIN10 and KIN11 via its N-terminal part. Interacts with GPL1 and GPL3 via its C-terminal part. As to expression, expressed in the apical meristem and young leaf primordia. Not detected in emerging or mature leaves. Detected in the vascular tissues of cotyledons and leaves, in hydathodes and at the base of flowers and siliques, but not in roots.

The protein localises to the nucleus. It localises to the nucleolus. Functionally, DNA-binding protein, which specifically recognizes the GL1 enhancer sequence. May be involved in leaf initiation. May play redundant roles with GPL1 and GPL2 in cytokinin responses by regulating the transcript levels of type-A ARR response genes. Involved in stress responses. Plays a repressive role in cell expansion by counteracting the positive role of CPR5 in this process, but does not regulate cell proliferation or endoreduplication. May play a role in plant defense. The polypeptide is GLABROUS1 enhancer-binding protein (Arabidopsis thaliana (Mouse-ear cress)).